The primary structure comprises 487 residues: Cyclic AMP-dependent transcription factor ATF-2 (487 aa).

A C2H2-type zinc finger spans residues 7–31; it reads FLCTAPGCGQRFTNEDHLAVHKHKH. Residue T34 is modified to Phosphothreonine; by PKC/PRKCH. S44 bears the Phosphoserine mark. A Phosphothreonine; by MAPK11 and MAPK14 modification is found at T51. Phosphothreonine; by MAPK1, MAPK3, MAPK11, MAPK12, MAPK14 and PLK3 is present on T53. T55 carries the phosphothreonine; by VRK1 modification. Residues S72 and S94 each carry the phosphoserine modification. T98 is modified (phosphothreonine). S103 is subject to Phosphoserine; by PKC/PRKCA and PKC/PRKCB. 2 disordered regions span residues 106-137 and 241-355; these read EEPSVVETTHQDSPLPHPESTTSDEKEVPLAQ and PGIP…RQKR. S118 is modified (phosphoserine). The segment covering 264-275 has biased composition (polar residues); that stretch reads LTQQHPPVTNGD. An essential for its histone acetyltransferase activity region spans residues 278–281; it reads KGHG. Over residues 300-316 the composition is skewed to low complexity; that stretch reads PATSTTETPASPAHTTP. S310 carries the phosphoserine modification. The residue at position 322 (S322) is a Phosphoserine; by PKC/PRKCA and PKC/PRKCB. Residues 328 to 345 are compositionally biased toward basic and acidic residues; that stretch reads AANEDPDEKRRKFLERNR. The bZIP domain maps to 334 to 397; that stretch reads DEKRRKFLER…AQLKQLLLAH (64 aa). A basic motif region spans residues 336–356; that stretch reads KRRKFLERNRAAASRCRQKRK. K339 bears the N6-acetyllysine mark. S349 bears the Phosphoserine; by PKC/PRKCA and PKC/PRKCB mark. An N6-acetyllysine modification is found at K356. A leucine-zipper region spans residues 362–390; it reads LEKKAEDLSSLNGQLQSEVTLLRNEVAQL. The Nuclear export signal motif lies at 387-396; that stretch reads VAQLKQLLLA. Residues 407–453 are disordered; that stretch reads KKSGYHTADKDDSSEDLSVPSSPHTEAIQHSSVSTSNGVSSTSKAEA. Phosphoserine is present on residues S424 and S428. Residues 425–436 show a composition bias toward polar residues; it reads VPSSPHTEAIQH. Low complexity predominate over residues 437–449; the sequence is SSVSTSNGVSSTS. Phosphoserine; by ATM is present on residues S472 and S480.

It belongs to the bZIP family. ATF subfamily. Binds DNA as a dimer and can form a homodimer in the absence of DNA. Can form a heterodimer with JUN. Heterodimerization is essential for its transcriptional activity. Interacts with SMAD3 and SMAD4. Interacts with the HK1/VDAC1 complex. Interacts with NBN, MRE11, XPO1, KAT5 and CUL3. Binds through its N-terminal region to UTF1 which acts as a coactivator of ATF2 transcriptional activity. Post-translationally, phosphorylation of Thr-51 by MAPK14 and MAPK11, and at Thr-53 by MAPK1/ERK2, MAPK3/ERK1, MAPK11, MAPK12 and MAPK14 in response to external stimulus like insulin causes increased transcriptional activity. Phosphorylated by PLK3 following hyperosmotic stress. Also phosphorylated and activated by JNK and CaMK4. ATM-mediated phosphorylation at Ser-472 and Ser-480 stimulates its function in DNA damage response. Phosphorylation at Ser-44, Thr-55 and Ser-103 activates its transcriptional activity. Phosphorylation at Thr-51 or Thr-53 enhances acetylation of histones H2B and H4.

The protein resides in the nucleus. Its subcellular location is the cytoplasm. It localises to the mitochondrion outer membrane. Functionally, transcriptional activator which regulates the transcription of various genes, including those involved in anti-apoptosis, cell growth, and DNA damage response. Dependent on its binding partner, binds to CRE (cAMP response element) consensus sequences (5'-TGACGTCA-3') or to AP-1 (activator protein 1) consensus sequences (5'-TGACTCA-3'). In the nucleus, contributes to global transcription and the DNA damage response, in addition to specific transcriptional activities that are related to cell development, proliferation and death. In the cytoplasm, interacts with and perturbs HK1- and VDAC1-containing complexes at the mitochondrial outer membrane, thereby impairing mitochondrial membrane potential, inducing mitochondrial leakage and promoting cell death. The phosphorylated form (mediated by ATM) plays a role in the DNA damage response and is involved in the ionizing radiation (IR)-induced S phase checkpoint control and in the recruitment of the MRN complex into the IR-induced foci (IRIF). Exhibits histone acetyltransferase (HAT) activity which specifically acetylates histones H2B and H4 in vitro. In concert with CUL3 and RBX1, promotes the degradation of KAT5 thereby attenuating its ability to acetylate and activate ATM. Can elicit oncogenic or tumor suppressor activities depending on the tissue or cell type. The polypeptide is Cyclic AMP-dependent transcription factor ATF-2 (Atf2) (Mus musculus (Mouse)).